A 408-amino-acid polypeptide reads, in one-letter code: MRMTLVHLSLSLFSCLLLVLSPTFIASTPVSEPELVVQEVNEKINASRRNLGVLSCGTGNPIDDCWRCDPKWEKNRQRLADCAIGFGKHAIGGRDGKIYVVTDSSDKDVVNPKPGTLRHAVIQDEPLWIIFARDMVIKLKEELIMNSFKTIDGRGASVHIAGGACITVQYVTNIIIHGVNIHDCKRKGNAYVRDSPSHYGWRTASDGDAVSIFGGSHVWVDHCSLSNCADGLIDAIHGSTAITISNNYLSHHNKVMLLGHSDSYTRDKNMQVTIAFNHFGEGLVQRMPRCRHGYFHVVNNDYTHWQMYAIGGSAAPTINSQGNRFLAPNDHVFKEVTKYEDAPRSKWKKWNWRSEGDLFLNGAFFTPSGGGASSSYAKASSLSARPSSLVASVTSNAGALFCRKGSRC.

A signal peptide spans 1–27 (MRMTLVHLSLSLFSCLLLVLSPTFIAS). N-linked (GlcNAc...) asparagine glycosylation is present at asparagine 45. Positions 206, 230, and 234 each coordinate Ca(2+). Arginine 286 is an active-site residue.

The protein belongs to the polysaccharide lyase 1 family. The cofactor is Ca(2+).

The catalysed reaction is Eliminative cleavage of (1-&gt;4)-alpha-D-galacturonan to give oligosaccharides with 4-deoxy-alpha-D-galact-4-enuronosyl groups at their non-reducing ends.. Its pathway is glycan metabolism; pectin degradation; 2-dehydro-3-deoxy-D-gluconate from pectin: step 2/5. The protein is Probable pectate lyase 5 of Arabidopsis thaliana (Mouse-ear cress).